The sequence spans 275 residues: Calcium-binding protein 4 (275 aa).

The span at 1–12 (MTTEQARGQQGP) shows a compositional bias: polar residues. Residues 1–112 (MTTEQARGQQ…SLHDAAQRTY (112 aa)) are disordered. The span at 38–55 (TRKRSKKERGLRGSRKRT) shows a compositional bias: basic residues. Serine 42 is modified (phosphoserine). EF-hand domains lie at 129 to 164 (EELD…LGYM), 183 to 200 (GRVD…KLRE), 206 to 241 (LGVR…LLGE), and 243 to 275 (LAGP…LSRH). Ca(2+) contacts are provided by aspartate 142, aspartate 144, aspartate 146, tyrosine 148, and glutamate 153. The Ca(2+) site is built by aspartate 219, aspartate 221, aspartate 223, arginine 225, glutamate 230, aspartate 256, asparagine 258, aspartate 260, threonine 262, and glutamate 267.

In terms of assembly, interacts with CACNA1F and CACNA1D (via IQ domain) in a calcium independent manner. Interacts (via N-terminus) with UNC119. Phosphorylated. Phosphorylation levels change with the light conditions and regulate the activity. As to expression, expressed in retina and in the inner hair cells (IHC) of the cochlea.

The protein localises to the cytoplasm. It is found in the presynapse. Involved in normal synaptic function through regulation of Ca(2+) influx and neurotransmitter release in photoreceptor synaptic terminals and in auditory transmission. Modulator of CACNA1D and CACNA1F, suppressing the calcium-dependent inactivation and shifting the activation range to more hyperpolarized voltages. In Homo sapiens (Human), this protein is Calcium-binding protein 4 (CABP4).